A 146-amino-acid chain; its full sequence is Leghemoglobin Lb120-34 (146 aa).

The 145-residue stretch at 2-146 (GFTEKQEALV…LASAIKKAMN (145 aa)) folds into the Globin domain. Nitrated tyrosine occurs at positions 24 and 29. Ser44 contributes to the heme b binding site. Ser44 carries the phosphoserine modification. His61 is an O2 binding site. Lys64, His93, and Lys96 together coordinate heme b. Tyr134 carries the post-translational modification Nitrated tyrosine.

This sequence belongs to the plant globin family. In terms of assembly, monomer. Post-translationally, nitrated in effective nodules and particularly in hypoxic conditions; this mechanism may play a protective role in the symbiosis by buffering toxic peroxynitrite NO(2)(-). Nitration level decrease during nodule senescence. Phosphorylation at Ser-44 disrupts the molecular environment of its porphyrin ring oxygen binding pocket, thus leading to a reduced oxygen consumption and to the delivery of oxygen O(2) to symbiosomes. In terms of tissue distribution, root nodules.

The protein localises to the cytoplasm. The protein resides in the cytosol. It is found in the nucleus. Leghemoglobin that reversibly binds oxygen O(2) through a pentacoordinated heme iron. In root nodules, facilitates the diffusion of oxygen to the bacteroids while preventing the bacterial nitrogenase from being inactivated by buffering dioxygen, nitric oxide and carbon monoxide, and promoting the formation of reactive oxygen species (ROS, e.g. H(2)O(2)). This role is essential for symbiotic nitrogen fixation (SNF). The protein is Leghemoglobin Lb120-34 of Pisum sativum (Garden pea).